Reading from the N-terminus, the 274-residue chain is Protein CIMAP1C (274 aa).

Residues 1 to 27 (MKLPKGTRSSVYFAQHPEKEPLPSRQE) are disordered. Positions 16 to 27 (HPEKEPLPSRQE) are enriched in basic and acidic residues. STPGR repeat units lie at residues 199–224 (PGPT…MAKR) and 235–260 (PGPG…MGIK).

It belongs to the CIMAP family.

This chain is Protein CIMAP1C, found in Homo sapiens (Human).